Reading from the N-terminus, the 543-residue chain is Lipoyl synthase, apicoplast (543 aa).

Positions 1 to 63 (MAYFFDFPTD…LFSLLSASQS (63 aa)) are cleaved as a signal peptide. [4Fe-4S] cluster contacts are provided by C252, C257, C263, C278, C282, C285, and S493. The region spanning 264–482 (WNGGTATLIL…QDIAEEMGFK (219 aa)) is the Radical SAM core domain.

This sequence belongs to the radical SAM superfamily. Lipoyl synthase family. [4Fe-4S] cluster is required as a cofactor.

Its subcellular location is the plastid. It localises to the apicoplast. It catalyses the reaction [[Fe-S] cluster scaffold protein carrying a second [4Fe-4S](2+) cluster] + N(6)-octanoyl-L-lysyl-[protein] + 2 oxidized [2Fe-2S]-[ferredoxin] + 2 S-adenosyl-L-methionine + 4 H(+) = [[Fe-S] cluster scaffold protein] + N(6)-[(R)-dihydrolipoyl]-L-lysyl-[protein] + 4 Fe(3+) + 2 hydrogen sulfide + 2 5'-deoxyadenosine + 2 L-methionine + 2 reduced [2Fe-2S]-[ferredoxin]. Its pathway is protein modification; protein lipoylation via endogenous pathway; protein N(6)-(lipoyl)lysine from octanoyl-[acyl-carrier-protein]: step 2/2. Catalyzes the radical-mediated insertion of two sulfur atoms into the C-6 and C-8 positions of the octanoyl moiety bound to the lipoyl domains of lipoate-dependent enzymes, thereby converting the octanoylated domains into lipoylated derivatives. This chain is Lipoyl synthase, apicoplast, found in Toxoplasma gondii.